A 224-amino-acid polypeptide reads, in one-letter code: Heme response regulator HssR (224 aa).

One can recognise a Response regulatory domain in the interval 3 to 116 (NCLIVDDDKK…ELLFRIKAVL (114 aa)). D52 carries the 4-aspartylphosphate modification. The ompR/PhoB-type DNA-binding region spans 124–222 (DNELQLGNLI…VRGQGYRVDQ (99 aa)).

Post-translationally, phosphorylated by HssS.

The protein localises to the cytoplasm. In terms of biological role, member of the two-component regulatory system HssS/HssR involved in intracellular heme homeostasis and tempering of staphylococcal virulence. Phosphorylated HssR binds to a direct repeat sequence within hrtAB promoter and activates the expression of hrtAB, an efflux pump, in response to extracellular heme, hemin, hemoglobin or blood. This chain is Heme response regulator HssR (hssR), found in Staphylococcus epidermidis (strain ATCC 12228 / FDA PCI 1200).